We begin with the raw amino-acid sequence, 201 residues long: Small ribosomal subunit protein uS4 (201 aa).

Residues 91-151 (SRLDNVVYRA…EKSQKMNWFE (61 aa)) enclose the S4 RNA-binding domain.

The protein belongs to the universal ribosomal protein uS4 family. In terms of assembly, part of the 30S ribosomal subunit. Contacts protein S5. The interaction surface between S4 and S5 is involved in control of translational fidelity.

In terms of biological role, one of the primary rRNA binding proteins, it binds directly to 16S rRNA where it nucleates assembly of the body of the 30S subunit. Functionally, with S5 and S12 plays an important role in translational accuracy. This Corynebacterium glutamicum (strain ATCC 13032 / DSM 20300 / JCM 1318 / BCRC 11384 / CCUG 27702 / LMG 3730 / NBRC 12168 / NCIMB 10025 / NRRL B-2784 / 534) protein is Small ribosomal subunit protein uS4.